We begin with the raw amino-acid sequence, 395 residues long: Putative 8-amino-7-oxononanoate synthase (395 aa).

Position 22 (Arg22) interacts with substrate. Pyridoxal 5'-phosphate is bound at residue 109–110 (GY). A substrate-binding site is contributed by His139. Pyridoxal 5'-phosphate-binding positions include Ser187, 212 to 215 (DEAH), and 241 to 244 (TFSK). Lys244 is subject to N6-(pyridoxal phosphate)lysine. Residue Thr358 coordinates substrate.

Belongs to the class-II pyridoxal-phosphate-dependent aminotransferase family. BioF subfamily. Homodimer. Pyridoxal 5'-phosphate is required as a cofactor.

The catalysed reaction is 6-carboxyhexanoyl-[ACP] + L-alanine + H(+) = (8S)-8-amino-7-oxononanoate + holo-[ACP] + CO2. It participates in cofactor biosynthesis; biotin biosynthesis. Functionally, catalyzes the decarboxylative condensation of pimeloyl-[acyl-carrier protein] and L-alanine to produce 8-amino-7-oxononanoate (AON), [acyl-carrier protein], and carbon dioxide. This chain is Putative 8-amino-7-oxononanoate synthase (bioF), found in Magnetococcus marinus (strain ATCC BAA-1437 / JCM 17883 / MC-1).